A 68-amino-acid polypeptide reads, in one-letter code: uncharacterized protein (68 aa).

Residues 24–44 (AHICKCIAMFFVVAGVVLMFF) traverse the membrane as a helical segment.

The protein localises to the endoplasmic reticulum. It localises to the membrane. This is an uncharacterized protein from Saccharomyces cerevisiae (strain ATCC 204508 / S288c) (Baker's yeast).